A 630-amino-acid polypeptide reads, in one-letter code: Probable potassium transport system protein Kup (630 aa).

The next 12 membrane-spanning stretches (helical) occupy residues 17–37 (LAIA…LYSL), 51–71 (PSAI…VVGI), 105–125 (ITGL…GDAV), 144–164 (PQLS…LFWI), 175–195 (LFGP…VYHI), 218–238 (VLLA…AEAL), 255–275 (YVLV…LLLL), 283–303 (PFFL…STVA), 344–364 (IYVP…VIGF), 374–394 (YGIA…VVMV), 402–422 (LLVA…FGAN), and 428–448 (QGGW…MTWY).

This sequence belongs to the HAK/KUP transporter (TC 2.A.72) family.

The protein resides in the cell inner membrane. It catalyses the reaction K(+)(in) + H(+)(in) = K(+)(out) + H(+)(out). Functionally, transport of potassium into the cell. Likely operates as a K(+):H(+) symporter. This chain is Probable potassium transport system protein Kup, found in Burkholderia thailandensis (strain ATCC 700388 / DSM 13276 / CCUG 48851 / CIP 106301 / E264).